The primary structure comprises 339 residues: Phenylalanine--tRNA ligase alpha subunit (339 aa).

A Mg(2+)-binding site is contributed by Glu-254.

The protein belongs to the class-II aminoacyl-tRNA synthetase family. Phe-tRNA synthetase alpha subunit type 1 subfamily. In terms of assembly, tetramer of two alpha and two beta subunits. Requires Mg(2+) as cofactor.

It is found in the cytoplasm. It carries out the reaction tRNA(Phe) + L-phenylalanine + ATP = L-phenylalanyl-tRNA(Phe) + AMP + diphosphate + H(+). This Clostridium botulinum (strain Alaska E43 / Type E3) protein is Phenylalanine--tRNA ligase alpha subunit.